Here is a 185-residue protein sequence, read N- to C-terminus: Ribosome-recycling factor (185 aa).

The protein belongs to the RRF family.

The protein resides in the cytoplasm. Its function is as follows. Responsible for the release of ribosomes from messenger RNA at the termination of protein biosynthesis. May increase the efficiency of translation by recycling ribosomes from one round of translation to another. This chain is Ribosome-recycling factor, found in Shewanella frigidimarina (strain NCIMB 400).